Consider the following 631-residue polypeptide: Phosphomethylpyrimidine synthase (631 aa).

Residues Asn-239, Met-268, Tyr-297, His-333, 353–355, 394–397, and Glu-433 each bind substrate; these read SRG and DGLR. Position 437 (His-437) interacts with Zn(2+). A substrate-binding site is contributed by Tyr-460. His-501 lines the Zn(2+) pocket. Positions 581, 584, and 589 each coordinate [4Fe-4S] cluster.

This sequence belongs to the ThiC family. Homodimer. The cofactor is [4Fe-4S] cluster.

It carries out the reaction 5-amino-1-(5-phospho-beta-D-ribosyl)imidazole + S-adenosyl-L-methionine = 4-amino-2-methyl-5-(phosphooxymethyl)pyrimidine + CO + 5'-deoxyadenosine + formate + L-methionine + 3 H(+). It functions in the pathway cofactor biosynthesis; thiamine diphosphate biosynthesis. Its function is as follows. Catalyzes the synthesis of the hydroxymethylpyrimidine phosphate (HMP-P) moiety of thiamine from aminoimidazole ribotide (AIR) in a radical S-adenosyl-L-methionine (SAM)-dependent reaction. This Citrobacter koseri (strain ATCC BAA-895 / CDC 4225-83 / SGSC4696) protein is Phosphomethylpyrimidine synthase.